Consider the following 611-residue polypeptide: Threonine--tRNA ligase (611 aa).

Residues M1–K27 form a disordered region. Positions P8–V24 are enriched in low complexity. Residues D209–P502 are catalytic. Zn(2+) contacts are provided by C302, H353, and H479.

It belongs to the class-II aminoacyl-tRNA synthetase family. In terms of assembly, homodimer. Zn(2+) serves as cofactor.

It localises to the cytoplasm. It catalyses the reaction tRNA(Thr) + L-threonine + ATP = L-threonyl-tRNA(Thr) + AMP + diphosphate + H(+). Functionally, catalyzes the attachment of threonine to tRNA(Thr) in a two-step reaction: L-threonine is first activated by ATP to form Thr-AMP and then transferred to the acceptor end of tRNA(Thr). Also edits incorrectly charged L-seryl-tRNA(Thr). The protein is Threonine--tRNA ligase of Synechococcus sp. (strain CC9605).